A 487-amino-acid polypeptide reads, in one-letter code: Cobyric acid synthase (487 aa).

Residues 251 to 439 form the GATase cobBQ-type domain; it reads KLKVVAPAYP…CHGVLDHPEA (189 aa). Catalysis depends on Cys332, which acts as the Nucleophile. The active site involves His431.

Belongs to the CobB/CobQ family. CobQ subfamily.

It participates in cofactor biosynthesis; adenosylcobalamin biosynthesis. In terms of biological role, catalyzes amidations at positions B, D, E, and G on adenosylcobyrinic A,C-diamide. NH(2) groups are provided by glutamine, and one molecule of ATP is hydrogenolyzed for each amidation. The chain is Cobyric acid synthase from Dechloromonas aromatica (strain RCB).